A 365-amino-acid polypeptide reads, in one-letter code: Peptide chain release factor 2 (365 aa).

N5-methylglutamine is present on Gln-251.

Belongs to the prokaryotic/mitochondrial release factor family. Post-translationally, methylated by PrmC. Methylation increases the termination efficiency of RF2.

It localises to the cytoplasm. Its function is as follows. Peptide chain release factor 2 directs the termination of translation in response to the peptide chain termination codons UGA and UAA. The protein is Peptide chain release factor 2 of Campylobacter jejuni subsp. jejuni serotype O:6 (strain 81116 / NCTC 11828).